Reading from the N-terminus, the 800-residue chain is DNA mismatch repair protein MutS (800 aa).

Residue 616 to 623 (GPNMGGKS) coordinates ATP.

This sequence belongs to the DNA mismatch repair MutS family.

In terms of biological role, this protein is involved in the repair of mismatches in DNA. It is possible that it carries out the mismatch recognition step. This protein has a weak ATPase activity. The sequence is that of DNA mismatch repair protein MutS from Buchnera aphidicola subsp. Baizongia pistaciae (strain Bp).